Here is a 456-residue protein sequence, read N- to C-terminus: Acid sphingomyelinase-like phosphodiesterase 3b (456 aa).

The signal sequence occupies residues 1–18 (MTLLGWLIFLAPWGVAGA). Asp-28 and His-30 together coordinate Zn(2+). A glycan (N-linked (GlcNAc...) asparagine) is linked at Asn-34. Cys-45 and Cys-64 form a disulfide bridge. N-linked (GlcNAc...) asparagine glycosylation is present at Asn-72. Asp-93 is a Zn(2+) binding site. An N-linked (GlcNAc...) asparagine glycan is attached at Asn-100. Asn-134 is a binding site for Zn(2+). Asn-164 and Asn-223 each carry an N-linked (GlcNAc...) asparagine glycan. Positions 236, 277, and 279 each coordinate Zn(2+). Cystine bridges form between Cys-405–Cys-409 and Cys-415–Cys-428.

Belongs to the acid sphingomyelinase family. In terms of assembly, interacts with TLR4, TLR7, TLR8 and TLR9. Zn(2+) is required as a cofactor. Post-translationally, N-glycosylated. Macrophages and dendritic cells.

It localises to the secreted. The protein resides in the cell membrane. Its function is as follows. Lipid-modulating phosphodiesterase. Active on the surface of macrophages and dendritic cells and strongly influences macrophage lipid composition and membrane fluidity. Acts as a negative regulator of Toll-like receptor signaling. Has in vitro phosphodiesterase activity, but the physiological substrate is unknown. Lacks activity with phosphocholine-containing lipids, but can cleave CDP-choline, and can release phosphate from ATP and ADP (in vitro). This Mus musculus (Mouse) protein is Acid sphingomyelinase-like phosphodiesterase 3b (Smpdl3b).